Here is a 199-residue protein sequence, read N- to C-terminus: NADH-quinone oxidoreductase subunit C (199 aa).

This sequence belongs to the complex I 30 kDa subunit family. NDH-1 is composed of 14 different subunits. Subunits NuoB, C, D, E, F, and G constitute the peripheral sector of the complex.

It localises to the cell inner membrane. The catalysed reaction is a quinone + NADH + 5 H(+)(in) = a quinol + NAD(+) + 4 H(+)(out). In terms of biological role, NDH-1 shuttles electrons from NADH, via FMN and iron-sulfur (Fe-S) centers, to quinones in the respiratory chain. The immediate electron acceptor for the enzyme in this species is believed to be ubiquinone. Couples the redox reaction to proton translocation (for every two electrons transferred, four hydrogen ions are translocated across the cytoplasmic membrane), and thus conserves the redox energy in a proton gradient. The chain is NADH-quinone oxidoreductase subunit C from Cupriavidus metallidurans (strain ATCC 43123 / DSM 2839 / NBRC 102507 / CH34) (Ralstonia metallidurans).